Reading from the N-terminus, the 202-residue chain is Orotate phosphoribosyltransferase (202 aa).

5-phospho-alpha-D-ribose 1-diphosphate is bound at residue 113-121; the sequence is EDIITTGGS. The orotate site is built by Thr117 and Arg145.

Belongs to the purine/pyrimidine phosphoribosyltransferase family. PyrE subfamily. As to quaternary structure, homodimer. Requires Mg(2+) as cofactor.

It catalyses the reaction orotidine 5'-phosphate + diphosphate = orotate + 5-phospho-alpha-D-ribose 1-diphosphate. The protein operates within pyrimidine metabolism; UMP biosynthesis via de novo pathway; UMP from orotate: step 1/2. Catalyzes the transfer of a ribosyl phosphate group from 5-phosphoribose 1-diphosphate to orotate, leading to the formation of orotidine monophosphate (OMP). The chain is Orotate phosphoribosyltransferase from Campylobacter lari (strain RM2100 / D67 / ATCC BAA-1060).